Here is a 186-residue protein sequence, read N- to C-terminus: Peptidyl-tRNA hydrolase (186 aa).

Tyr14 lines the tRNA pocket. Catalysis depends on His19, which acts as the Proton acceptor. TRNA is bound by residues Tyr64, Asn66, and Asn112.

The protein belongs to the PTH family. As to quaternary structure, monomer.

It is found in the cytoplasm. The catalysed reaction is an N-acyl-L-alpha-aminoacyl-tRNA + H2O = an N-acyl-L-amino acid + a tRNA + H(+). Hydrolyzes ribosome-free peptidyl-tRNAs (with 1 or more amino acids incorporated), which drop off the ribosome during protein synthesis, or as a result of ribosome stalling. In terms of biological role, catalyzes the release of premature peptidyl moieties from peptidyl-tRNA molecules trapped in stalled 50S ribosomal subunits, and thus maintains levels of free tRNAs and 50S ribosomes. This is Peptidyl-tRNA hydrolase from Bacillus cereus (strain ATCC 10987 / NRS 248).